Here is an 879-residue protein sequence, read N- to C-terminus: Alanine--tRNA ligase (879 aa).

Zn(2+)-binding residues include histidine 565, histidine 569, cysteine 674, and histidine 678.

It belongs to the class-II aminoacyl-tRNA synthetase family. Requires Zn(2+) as cofactor.

The protein resides in the cytoplasm. It catalyses the reaction tRNA(Ala) + L-alanine + ATP = L-alanyl-tRNA(Ala) + AMP + diphosphate. Catalyzes the attachment of alanine to tRNA(Ala) in a two-step reaction: alanine is first activated by ATP to form Ala-AMP and then transferred to the acceptor end of tRNA(Ala). Also edits incorrectly charged Ser-tRNA(Ala) and Gly-tRNA(Ala) via its editing domain. This is Alanine--tRNA ligase from Gluconobacter oxydans (strain 621H) (Gluconobacter suboxydans).